Consider the following 1239-residue polypeptide: DNA topoisomerase 2 (1239 aa).

ATP is bound by residues Asn-65, Asn-96, Ser-124 to Asn-126, Gly-137 to Lys-144, and Gln-354 to Lys-356. The Toprim domain occupies Arg-434–Ile-548. Glu-440, Asp-517, and Asp-519 together coordinate Mg(2+). Residues Ile-685–Leu-1101 enclose the Topo IIA-type catalytic domain. Tyr-775 (O-(5'-phospho-DNA)-tyrosine intermediate) is an active-site residue. Positions Ala-956 to Gly-965 are interaction with DNA. The interval Pro-1167–Val-1206 is disordered.

Belongs to the type II topoisomerase family. As to quaternary structure, homodimer. The cofactor is Mg(2+). Mn(2+) is required as a cofactor. It depends on Ca(2+) as a cofactor.

It is found in the nucleus. The protein resides in the mitochondrion matrix. Its subcellular location is the kinetoplast. The enzyme catalyses ATP-dependent breakage, passage and rejoining of double-stranded DNA.. Functionally, control of topological states of DNA by transient breakage and subsequent rejoining of DNA strands. Topoisomerase II makes double-strand breaks. This chain is DNA topoisomerase 2 (TOP2), found in Crithidia fasciculata.